A 477-amino-acid polypeptide reads, in one-letter code: Ribulose bisphosphate carboxylase large chain (477 aa).

The propeptide occupies 1 to 2 (MS). Pro3 is modified (N-acetylproline). Lys14 bears the N6,N6,N6-trimethyllysine mark. Substrate contacts are provided by Asn123 and Thr173. The active-site Proton acceptor is the Lys175. Lys177 contacts substrate. Mg(2+) contacts are provided by Lys201, Asp203, and Glu204. The residue at position 201 (Lys201) is an N6-carboxylysine. His294 acts as the Proton acceptor in catalysis. The substrate site is built by Arg295, His327, and Ser379.

The protein belongs to the RuBisCO large chain family. Type I subfamily. As to quaternary structure, heterohexadecamer of 8 large chains and 8 small chains; disulfide-linked. The disulfide link is formed within the large subunit homodimers. The cofactor is Mg(2+). The disulfide bond which can form in the large chain dimeric partners within the hexadecamer appears to be associated with oxidative stress and protein turnover.

The protein resides in the plastid. It is found in the chloroplast. It carries out the reaction 2 (2R)-3-phosphoglycerate + 2 H(+) = D-ribulose 1,5-bisphosphate + CO2 + H2O. It catalyses the reaction D-ribulose 1,5-bisphosphate + O2 = 2-phosphoglycolate + (2R)-3-phosphoglycerate + 2 H(+). Functionally, ruBisCO catalyzes two reactions: the carboxylation of D-ribulose 1,5-bisphosphate, the primary event in carbon dioxide fixation, as well as the oxidative fragmentation of the pentose substrate in the photorespiration process. Both reactions occur simultaneously and in competition at the same active site. This chain is Ribulose bisphosphate carboxylase large chain, found in Cichorium intybus (Chicory).